A 266-amino-acid chain; its full sequence is Phosphatidylserine decarboxylase proenzyme (266 aa).

Residues D74, H135, and S237 each act as charge relay system; for autoendoproteolytic cleavage activity in the active site. S237 (schiff-base intermediate with substrate; via pyruvic acid; for decarboxylase activity) is an active-site residue. S237 is subject to Pyruvic acid (Ser); by autocatalysis.

This sequence belongs to the phosphatidylserine decarboxylase family. PSD-B subfamily. Prokaryotic type I sub-subfamily. As to quaternary structure, heterodimer of a large membrane-associated beta subunit and a small pyruvoyl-containing alpha subunit. It depends on pyruvate as a cofactor. Is synthesized initially as an inactive proenzyme. Formation of the active enzyme involves a self-maturation process in which the active site pyruvoyl group is generated from an internal serine residue via an autocatalytic post-translational modification. Two non-identical subunits are generated from the proenzyme in this reaction, and the pyruvate is formed at the N-terminus of the alpha chain, which is derived from the carboxyl end of the proenzyme. The autoendoproteolytic cleavage occurs by a canonical serine protease mechanism, in which the side chain hydroxyl group of the serine supplies its oxygen atom to form the C-terminus of the beta chain, while the remainder of the serine residue undergoes an oxidative deamination to produce ammonia and the pyruvoyl prosthetic group on the alpha chain. During this reaction, the Ser that is part of the protease active site of the proenzyme becomes the pyruvoyl prosthetic group, which constitutes an essential element of the active site of the mature decarboxylase.

The protein localises to the cell membrane. The catalysed reaction is a 1,2-diacyl-sn-glycero-3-phospho-L-serine + H(+) = a 1,2-diacyl-sn-glycero-3-phosphoethanolamine + CO2. The protein operates within phospholipid metabolism; phosphatidylethanolamine biosynthesis; phosphatidylethanolamine from CDP-diacylglycerol: step 2/2. In terms of biological role, catalyzes the formation of phosphatidylethanolamine (PtdEtn) from phosphatidylserine (PtdSer). The polypeptide is Phosphatidylserine decarboxylase proenzyme (Campylobacter jejuni subsp. jejuni serotype O:2 (strain ATCC 700819 / NCTC 11168)).